A 218-amino-acid chain; its full sequence is Phosphatidylserine decarboxylase proenzyme (218 aa).

Serine 187 (schiff-base intermediate with substrate; via pyruvic acid) is an active-site residue. Serine 187 is subject to Pyruvic acid (Ser); by autocatalysis.

This sequence belongs to the phosphatidylserine decarboxylase family. PSD-A subfamily. Heterodimer of a large membrane-associated beta subunit and a small pyruvoyl-containing alpha subunit. Pyruvate is required as a cofactor. Is synthesized initially as an inactive proenzyme. Formation of the active enzyme involves a self-maturation process in which the active site pyruvoyl group is generated from an internal serine residue via an autocatalytic post-translational modification. Two non-identical subunits are generated from the proenzyme in this reaction, and the pyruvate is formed at the N-terminus of the alpha chain, which is derived from the carboxyl end of the proenzyme. The post-translation cleavage follows an unusual pathway, termed non-hydrolytic serinolysis, in which the side chain hydroxyl group of the serine supplies its oxygen atom to form the C-terminus of the beta chain, while the remainder of the serine residue undergoes an oxidative deamination to produce ammonia and the pyruvoyl prosthetic group on the alpha chain.

Its subcellular location is the cell membrane. It catalyses the reaction a 1,2-diacyl-sn-glycero-3-phospho-L-serine + H(+) = a 1,2-diacyl-sn-glycero-3-phosphoethanolamine + CO2. Its pathway is phospholipid metabolism; phosphatidylethanolamine biosynthesis; phosphatidylethanolamine from CDP-diacylglycerol: step 2/2. Catalyzes the formation of phosphatidylethanolamine (PtdEtn) from phosphatidylserine (PtdSer). This is Phosphatidylserine decarboxylase proenzyme from Geobacter metallireducens (strain ATCC 53774 / DSM 7210 / GS-15).